Consider the following 317-residue polypeptide: tRNA dimethylallyltransferase (317 aa).

14-21 (GPTAVGKT) serves as a coordination point for ATP. 16 to 21 (TAVGKT) serves as a coordination point for substrate. Residues 39–42 (DSMQ) form an interaction with substrate tRNA region.

This sequence belongs to the IPP transferase family. In terms of assembly, monomer. It depends on Mg(2+) as a cofactor.

The enzyme catalyses adenosine(37) in tRNA + dimethylallyl diphosphate = N(6)-dimethylallyladenosine(37) in tRNA + diphosphate. In terms of biological role, catalyzes the transfer of a dimethylallyl group onto the adenine at position 37 in tRNAs that read codons beginning with uridine, leading to the formation of N6-(dimethylallyl)adenosine (i(6)A). The protein is tRNA dimethylallyltransferase of Bacillus cereus (strain Q1).